Consider the following 162-residue polypeptide: Selenoprotein F (162 aa).

The first 28 residues, 1 to 28 (MAARRDGWLGPAFGLRLLLATVLQTVSA), serve as a signal peptide directing secretion. A non-standard amino acid (selenocysteine) is located at residue Sec93.

The protein belongs to the selenoprotein M/F family. As to quaternary structure, forms a tight complex with UGGT1/UGCGL1. Interacts with UGGT2/UGCGL2. Interacts with RDH11.

Its subcellular location is the endoplasmic reticulum lumen. May be involved in redox reactions associated with the formation of disulfide bonds. May contribute to the quality control of protein folding in the endoplasmic reticulum. May regulate protein folding by enhancing the catalytic activity of UGGT1/UGCGL1 and UGGT2/UGCGL2. The sequence is that of Selenoprotein F from Bos taurus (Bovine).